The sequence spans 149 residues: MASKRISRELRDMQRHPPANCSAGPVAEEDIFHWQATIMGPHDSPYSGGVFTVSIDFSSDYPFKPPKVNFKTKVYHPNIDSKGSICLDILKEQWSPAPTTSKVLLSICSLLTDPNPNDPLVPEIAHLYKVDKSKYESTAQKWTQKYAMG.

Over residues 1–15 (MASKRISRELRDMQR) the composition is skewed to basic and acidic residues. The disordered stretch occupies residues 1–22 (MASKRISRELRDMQRHPPANCS). Residues 1 to 148 (MASKRISREL…AQKWTQKYAM (148 aa)) enclose the UBC core domain. The active-site Glycyl thioester intermediate is the Cys-86.

It belongs to the ubiquitin-conjugating enzyme family. Ubiquitously expressed at very low levels.

The enzyme catalyses S-ubiquitinyl-[E1 ubiquitin-activating enzyme]-L-cysteine + [E2 ubiquitin-conjugating enzyme]-L-cysteine = [E1 ubiquitin-activating enzyme]-L-cysteine + S-ubiquitinyl-[E2 ubiquitin-conjugating enzyme]-L-cysteine.. The protein operates within protein modification; protein ubiquitination. In terms of biological role, accepts the ubiquitin from the E1 complex and catalyzes its covalent attachment to other proteins. This Arabidopsis thaliana (Mouse-ear cress) protein is Probable ubiquitin-conjugating enzyme E2 12 (UBC12).